Reading from the N-terminus, the 532-residue chain is Probable cyclic di-GMP phosphodiesterase PdeD (532 aa).

Helical transmembrane passes span 16-36 (MIVC…VRFI) and 245-265 (LPLA…ATAY). The 250-residue stretch at 266–515 (RMSFSREINL…DFPKWLAGSQ (250 aa)) folds into the EAL domain.

The protein localises to the cell membrane. It catalyses the reaction 3',3'-c-di-GMP + H2O = 5'-phosphoguanylyl(3'-&gt;5')guanosine + H(+). In terms of biological role, phosphodiesterase (PDE) that catalyzes the hydrolysis of cyclic-di-GMP (c-di-GMP) to 5'-pGpG. May serve as a negative regulator of cellulose synthesis (as has been suggested for S.typhimurium); overexpression inhibits cell aggregation in strains able to produce adhesive curli fimbriae. Cyclic-di-GMP is a second messenger which controls cell surface-associated traits in bacteria. This chain is Probable cyclic di-GMP phosphodiesterase PdeD, found in Escherichia coli (strain K12).